The following is an 826-amino-acid chain: Eukaryotic translation initiation factor 3 subunit C (826 aa).

Disordered regions lie at residues 1–71 and 205–227; these read MSRF…GKGA and SGGD…PRAK. Residues 10-20 show a composition bias toward acidic residues; it reads DSDDSSSDEDL. The segment covering 21-30 has biased composition (low complexity); that stretch reads YGSGSESGSD. Over residues 32–65 the composition is skewed to acidic residues; it reads SQDEQDGGDDNDDDMSDDSMFADDSDDDSDDDED. The span at 218–227 shows a compositional bias: basic and acidic residues; the sequence is KEDKPKPRAK. Residues 605-779 form the PCI domain; the sequence is FHTHINLELL…NSVVFTQAVQ (175 aa).

This sequence belongs to the eIF-3 subunit C family. As to quaternary structure, component of the eukaryotic translation initiation factor 3 (eIF-3) complex.

The protein localises to the cytoplasm. Functionally, component of the eukaryotic translation initiation factor 3 (eIF-3) complex, which is involved in protein synthesis of a specialized repertoire of mRNAs and, together with other initiation factors, stimulates binding of mRNA and methionyl-tRNAi to the 40S ribosome. The eIF-3 complex specifically targets and initiates translation of a subset of mRNAs involved in cell proliferation. The protein is Eukaryotic translation initiation factor 3 subunit C of Yarrowia lipolytica (strain CLIB 122 / E 150) (Yeast).